We begin with the raw amino-acid sequence, 367 residues long: UDP-D-xylose:L-fucose alpha-1,3-D-xylosyltransferase (367 aa).

Residues methionine 1–glutamine 10 show a composition bias toward polar residues. The interval methionine 1–tyrosine 21 is disordered. The Cytoplasmic segment spans residues methionine 1–asparagine 35. Low complexity predominate over residues arginine 12–tyrosine 21. Residues glycine 36–glycine 56 form a helical; Signal-anchor for type II membrane protein membrane-spanning segment. Residues serine 57 to glutamine 367 lie on the Lumenal side of the membrane. Residues asparagine 85, asparagine 98, and asparagine 173 are each glycosylated (N-linked (GlcNAc...) asparagine). The DXD motif motif lies at aspartate 196 to aspartate 198. Asparagine 228 and asparagine 292 each carry an N-linked (GlcNAc...) asparagine glycan.

It belongs to the glycosyltransferase 77 family. Mn(2+) is required as a cofactor. Mg(2+) serves as cofactor. In terms of processing, glycosylated. As to expression, expressed in roots, rosette leaves, stems and flowers.

The protein resides in the golgi apparatus membrane. Catalyzes the transfer of D-xylose from UDP-alpha-D-xylose onto L-fucose. Probably involved in the biosynthesis of rhamnogalacturonan II (RG-II) through xylosylation of the internal fucose moiety of the A-chain of RG-II, a structurally complex pectic polysaccharide of the primary cell wall. RG-II is essential for the cell wall integrity of rapidly growing tissues such as roots and pollen tube growth and elongation. In Arabidopsis thaliana (Mouse-ear cress), this protein is UDP-D-xylose:L-fucose alpha-1,3-D-xylosyltransferase.